Here is a 723-residue protein sequence, read N- to C-terminus: Polyribonucleotide nucleotidyltransferase (723 aa).

Residues D488 and D494 each coordinate Mg(2+). In terms of domain architecture, KH spans 555–614 (PRMITMKIHPDKIREVIGKGGSTIQALTKETGTTIDIQEDGTITIASTSTDGMAEAKRRI). Positions 624–692 (GKIYAGTVLK…EKGRLRLSLK (69 aa)) constitute an S1 motif domain. The disordered stretch occupies residues 701–723 (SISPINAGEAAAPAAPAEGSEQQ). Residues 707 to 723 (AGEAAAPAAPAEGSEQQ) show a composition bias toward low complexity.

The protein belongs to the polyribonucleotide nucleotidyltransferase family. The cofactor is Mg(2+).

It is found in the cytoplasm. The enzyme catalyses RNA(n+1) + phosphate = RNA(n) + a ribonucleoside 5'-diphosphate. In terms of biological role, involved in mRNA degradation. Catalyzes the phosphorolysis of single-stranded polyribonucleotides processively in the 3'- to 5'-direction. This chain is Polyribonucleotide nucleotidyltransferase, found in Cupriavidus necator (strain ATCC 17699 / DSM 428 / KCTC 22496 / NCIMB 10442 / H16 / Stanier 337) (Ralstonia eutropha).